The chain runs to 192 residues: Putative 3-methyladenine DNA glycosylase (192 aa).

It belongs to the DNA glycosylase MPG family.

This is Putative 3-methyladenine DNA glycosylase from Bdellovibrio bacteriovorus (strain ATCC 15356 / DSM 50701 / NCIMB 9529 / HD100).